Reading from the N-terminus, the 200-residue chain is Chromophore lyase CpcS/CpeS (200 aa).

The protein belongs to the CpcS/CpeS biliprotein lyase family.

Its function is as follows. Covalently attaches a chromophore to Cys residue(s) of phycobiliproteins. The polypeptide is Chromophore lyase CpcS/CpeS (Synechococcus sp. (strain WH8020)).